The chain runs to 155 residues: Small ribosomal subunit protein uS7 (155 aa).

The protein belongs to the universal ribosomal protein uS7 family. In terms of assembly, part of the 30S ribosomal subunit. Contacts proteins S9 and S11.

Functionally, one of the primary rRNA binding proteins, it binds directly to 16S rRNA where it nucleates assembly of the head domain of the 30S subunit. Is located at the subunit interface close to the decoding center, probably blocks exit of the E-site tRNA. The chain is Small ribosomal subunit protein uS7 from Prosthecochloris aestuarii (strain DSM 271 / SK 413).